Reading from the N-terminus, the 398-residue chain is Succinyl-diaminopimelate desuccinylase (398 aa).

Histidine 73 lines the Zn(2+) pocket. Aspartate 75 is a catalytic residue. Aspartate 106 lines the Zn(2+) pocket. The Proton acceptor role is filled by glutamate 140. Zn(2+)-binding residues include glutamate 141, glutamate 169, and histidine 366.

Belongs to the peptidase M20A family. DapE subfamily. Homodimer. Zn(2+) is required as a cofactor. Co(2+) serves as cofactor.

The enzyme catalyses N-succinyl-(2S,6S)-2,6-diaminopimelate + H2O = (2S,6S)-2,6-diaminopimelate + succinate. It participates in amino-acid biosynthesis; L-lysine biosynthesis via DAP pathway; LL-2,6-diaminopimelate from (S)-tetrahydrodipicolinate (succinylase route): step 3/3. Catalyzes the hydrolysis of N-succinyl-L,L-diaminopimelic acid (SDAP), forming succinate and LL-2,6-diaminopimelate (DAP), an intermediate involved in the bacterial biosynthesis of lysine and meso-diaminopimelic acid, an essential component of bacterial cell walls. The sequence is that of Succinyl-diaminopimelate desuccinylase from Agrobacterium fabrum (strain C58 / ATCC 33970) (Agrobacterium tumefaciens (strain C58)).